A 173-amino-acid polypeptide reads, in one-letter code: Nuclear transcription factor Y subunit B-8 (173 aa).

The segment at 1–30 is disordered; the sequence is MAESQAKSPGGCGSHESGGDQSPRSLHVRE. Residue Ala2 is modified to N-acetylalanine. A DNA-binding region spans residues 35–41; sequence LPIANIS. Positions 62–73 are subunit association domain (SAD); that stretch reads VQECVSEFISFV. The interval 123–173 is disordered; the sequence is DTKGSAKGGDPNAKKDGQSSQNGQFSQLAHQGPYGNSQAQQHMMVPMPGTD. Residues 140–163 show a composition bias toward polar residues; it reads QSSQNGQFSQLAHQGPYGNSQAQQ.

This sequence belongs to the NFYB/HAP3 subunit family. Heterotrimeric transcription factor composed of three components, NF-YA, NF-YB and NF-YC. NF-YB and NF-YC must interact and dimerize for NF-YA association and DNA binding. In terms of tissue distribution, expressed in flowers and mature rosettes.

Its subcellular location is the nucleus. Its function is as follows. Component of the NF-Y/HAP transcription factor complex. The NF-Y complex stimulates the transcription of various genes by recognizing and binding to a CCAAT motif in promoters. The chain is Nuclear transcription factor Y subunit B-8 (NFYB8) from Arabidopsis thaliana (Mouse-ear cress).